Reading from the N-terminus, the 289-residue chain is Mitochondrial fission regulator 1-like (289 aa).

The residue at position 27 (T27) is a Phosphothreonine. Residues S38, S100, S107, S221, S222, S235, S258, and S270 each carry the phosphoserine modification.

The protein belongs to the MTFR1 family. In terms of processing, phosphorylated by AMPK. Upon stress, phosphorylation by AMPK is sufficient to induce mitochondrial fragmentation.

It localises to the mitochondrion outer membrane. In terms of biological role, mitochondrial protein required for adaptation of miochondrial dynamics to metabolic changes. Regulates mitochondrial morphology at steady state and mediates AMPK-dependent stress-induced mitochondrial fragmentation via the control of OPA1 levels. In Bos taurus (Bovine), this protein is Mitochondrial fission regulator 1-like (MTFR1L).